Consider the following 773-residue polypeptide: Phenylalanine--tRNA ligase beta subunit (773 aa).

Residues 39–150 form the tRNA-binding domain; the sequence is LKAPDKVVVG…GKLELGRPLN (112 aa). The B5 domain occupies 391–467; that stretch reads KELPIIPISI…RIIGIDNIAS (77 aa). Mg(2+)-binding residues include D445, D451, E454, and E455. The FDX-ACB domain occupies 682–773; the sequence is SKFPAITRDL…TLKNLGLDLR (92 aa).

This sequence belongs to the phenylalanyl-tRNA synthetase beta subunit family. Type 1 subfamily. Tetramer of two alpha and two beta subunits. Requires Mg(2+) as cofactor.

The protein resides in the cytoplasm. It carries out the reaction tRNA(Phe) + L-phenylalanine + ATP = L-phenylalanyl-tRNA(Phe) + AMP + diphosphate + H(+). The chain is Phenylalanine--tRNA ligase beta subunit from Campylobacter jejuni (strain RM1221).